The primary structure comprises 99 residues: Phosphoribosyl-ATP pyrophosphatase (99 aa).

It belongs to the PRA-PH family.

Its subcellular location is the cytoplasm. It catalyses the reaction 1-(5-phospho-beta-D-ribosyl)-ATP + H2O = 1-(5-phospho-beta-D-ribosyl)-5'-AMP + diphosphate + H(+). The protein operates within amino-acid biosynthesis; L-histidine biosynthesis; L-histidine from 5-phospho-alpha-D-ribose 1-diphosphate: step 2/9. This is Phosphoribosyl-ATP pyrophosphatase from Methanococcoides burtonii (strain DSM 6242 / NBRC 107633 / OCM 468 / ACE-M).